A 3658-amino-acid chain; its full sequence is E3 ubiquitin-protein ligase UPL2 (3658 aa).

Residues 884–893 are compositionally biased toward basic and acidic residues; the sequence is DEKKSVDRAS. The interval 884 to 914 is disordered; sequence DEKKSVDRASDNSVSASSSTAERESDEDSSN. Low complexity predominate over residues 894–903; sequence DNSVSASSST. One can recognise a UBA domain in the interval 1271–1312; that stretch reads QPDEAIVGMIVEMGFSRSRAEDALRRVGTNSVEMAMDWLFTN. The 20-residue stretch at 1318 to 1337 folds into the UIM domain; that stretch reads QEDDELAQALALSLGNSSET. Disordered stretches follow at residues 1331–1360, 1702–1733, 2004–2038, 2052–2072, 2113–2204, 2293–2313, 2417–2487, 2503–2591, and 2958–2987; these read LGNS…KEPP, VSGS…SKSH, AEQL…VDEL, VDNG…RGSS, HVED…DDMV, PLFS…SAGS, ERET…EGGG, SAQG…PEVN, and SPSS…AESE. Residues 1338–1347 show a composition bias toward basic and acidic residues; the sequence is PKLEDTEKPV. Residues 2007–2027 show a composition bias toward basic and acidic residues; that stretch reads LKSEVPNEQKNTDSDERHDSH. Residues 2028-2038 show a composition bias toward polar residues; that stretch reads GTSTSTEVDEL. Composition is skewed to acidic residues over residues 2117–2144 and 2156–2204; these read RADD…DSVE and DVED…DDMV. The span at 2297 to 2313 shows a compositional bias: polar residues; the sequence is RPSQTGNTASVSASAGS. Low complexity predominate over residues 2422 to 2431; sequence TTEVQEQQQP. Residues 2503 to 2518 are compositionally biased toward polar residues; that stretch reads SAQGQSDTSGIQNVSV. S2582 is modified (phosphoserine). One can recognise an HECT domain in the interval 3317-3658; that stretch reads SPQDLKGRLN…HEANEGFGFA (342 aa). Residue C3625 is the Glycyl thioester intermediate of the active site.

The protein belongs to the UPL family. TOM1/PTR1 subfamily. In terms of tissue distribution, widely expressed. Expressed in root, stem, cauline and rosette leaf, seedling and flower (at protein level).

The enzyme catalyses S-ubiquitinyl-[E2 ubiquitin-conjugating enzyme]-L-cysteine + [acceptor protein]-L-lysine = [E2 ubiquitin-conjugating enzyme]-L-cysteine + N(6)-ubiquitinyl-[acceptor protein]-L-lysine.. Its pathway is protein modification; protein ubiquitination. Its function is as follows. Probable E3 ubiquitin-protein ligase which mediates ubiquitination and subsequent proteasomal degradation of target proteins. The protein is E3 ubiquitin-protein ligase UPL2 (UPL2) of Arabidopsis thaliana (Mouse-ear cress).